Consider the following 315-residue polypeptide: Ribonuclease HII (315 aa).

The 190-residue stretch at 78–267 (TLVAGVDEAG…VREALGLAPL (190 aa)) folds into the RNase H type-2 domain. Asp-84, Glu-85, and Asp-176 together coordinate a divalent metal cation. Residues 273–292 (APPPESAAEPGGEGAIAGIA) form a disordered region. The segment covering 278–292 (SAAEPGGEGAIAGIA) has biased composition (low complexity).

The protein belongs to the RNase HII family. The cofactor is Mn(2+). It depends on Mg(2+) as a cofactor.

The protein resides in the cytoplasm. It carries out the reaction Endonucleolytic cleavage to 5'-phosphomonoester.. Functionally, endonuclease that specifically degrades the RNA of RNA-DNA hybrids. The protein is Ribonuclease HII of Anaeromyxobacter sp. (strain Fw109-5).